We begin with the raw amino-acid sequence, 556 residues long: Chaperone protein HscC (556 aa).

This sequence belongs to the heat shock protein 70 family.

Functionally, probable chaperone. Has ATPase activity. Not stimulated by DnaJ. The polypeptide is Chaperone protein HscC (hscC) (Escherichia coli (strain K12)).